The sequence spans 467 residues: Megakaryocyte-associated tyrosine-protein kinase (467 aa).

The tract at residues 1–20 (MPTQRWAPGTQCMTKCENSR) is disordered. Residues 7–69 (APGTQCMTKC…AAAALRQREA (63 aa)) form the SH3 domain. One can recognise an SH2 domain in the interval 81-170 (WFHGKISGQE…AICTKLVKPK (90 aa)). The region spanning 194–443 (LTLGAQIGEG…IVEKLGRELR (250 aa)) is the Protein kinase domain. Residues 200–208 (IGEGEFGAV) and lysine 221 each bind ATP. The Proton acceptor role is filled by aspartate 311. A disordered region spans residues 445–467 (VGVAAPAGGQEAEGSAPTRSQDP).

It belongs to the protein kinase superfamily. Tyr protein kinase family. CSK subfamily. Interacts with KIT. Enriched in lymphoid tissues.

It is found in the cytoplasm. Its subcellular location is the membrane. It catalyses the reaction L-tyrosyl-[protein] + ATP = O-phospho-L-tyrosyl-[protein] + ADP + H(+). In terms of biological role, could play a significant role in the signal transduction of hematopoietic cells. May regulate tyrosine kinase activity of SRC-family members in brain. This Rattus norvegicus (Rat) protein is Megakaryocyte-associated tyrosine-protein kinase (Matk).